A 360-amino-acid polypeptide reads, in one-letter code: uncharacterized protein (360 aa).

The span at 22-32 (EEDVEPNEEAE) shows a compositional bias: acidic residues. The interval 22–55 (EEDVEPNEEAEGPGGVHKKRRGARKKNRRQRMEG) is disordered. A compositionally biased stretch (basic residues) spans 37 to 50 (VHKKRRGARKKNRR).

This is an uncharacterized protein from Caenorhabditis elegans.